The following is an 81-amino-acid chain: Photosystem I iron-sulfur center (81 aa).

4Fe-4S ferredoxin-type domains lie at 2 to 31 (AHTV…MVPW) and 37 to 68 (GQIA…IRVY). C11, C14, C17, C21, C48, C51, C54, and C58 together coordinate [4Fe-4S] cluster.

As to quaternary structure, the cyanobacterial PSI reaction center is composed of one copy each of PsaA,B,C,D,E,F,I,J,K,L,M and X, and forms trimeric complexes. It depends on [4Fe-4S] cluster as a cofactor.

Its subcellular location is the cellular thylakoid membrane. It carries out the reaction reduced [plastocyanin] + hnu + oxidized [2Fe-2S]-[ferredoxin] = oxidized [plastocyanin] + reduced [2Fe-2S]-[ferredoxin]. In terms of biological role, apoprotein for the two 4Fe-4S centers FA and FB of photosystem I (PSI); essential for photochemical activity. FB is the terminal electron acceptor of PSI, donating electrons to ferredoxin. The C-terminus interacts with PsaA/B/D and helps assemble the protein into the PSI complex. Required for binding of PsaD and PsaE to PSI. PSI is a plastocyanin/cytochrome c6-ferredoxin oxidoreductase, converting photonic excitation into a charge separation, which transfers an electron from the donor P700 chlorophyll pair to the spectroscopically characterized acceptors A0, A1, FX, FA and FB in turn. This is Photosystem I iron-sulfur center (psaC) from Synechococcus elongatus.